We begin with the raw amino-acid sequence, 90 residues long: Small ribosomal subunit protein bS16 (90 aa).

Belongs to the bacterial ribosomal protein bS16 family.

This Streptococcus equi subsp. zooepidemicus (strain H70) protein is Small ribosomal subunit protein bS16.